We begin with the raw amino-acid sequence, 138 residues long: Large ribosomal subunit protein uL16 (138 aa).

The span at 1–13 (MLQPARRKYRKEQ) shows a compositional bias: basic residues. The interval 1-22 (MLQPARRKYRKEQKGRNTGIAT) is disordered.

It belongs to the universal ribosomal protein uL16 family. Part of the 50S ribosomal subunit.

Functionally, binds 23S rRNA and is also seen to make contacts with the A and possibly P site tRNAs. The polypeptide is Large ribosomal subunit protein uL16 (Delftia acidovorans (strain DSM 14801 / SPH-1)).